The primary structure comprises 198 residues: Recombination protein RecR (198 aa).

The C4-type zinc finger occupies 57–72 (CEKCNTFTEAQICEVC). The 96-residue stretch at 80–175 (TLLCVVETPA…AVTRLARGVP (96 aa)) folds into the Toprim domain.

Belongs to the RecR family.

Functionally, may play a role in DNA repair. It seems to be involved in an RecBC-independent recombinational process of DNA repair. It may act with RecF and RecO. The polypeptide is Recombination protein RecR (Paraburkholderia phytofirmans (strain DSM 17436 / LMG 22146 / PsJN) (Burkholderia phytofirmans)).